A 1107-amino-acid polypeptide reads, in one-letter code: Rho GTPase-activating protein 45 (1107 aa).

The disordered stretch occupies residues 1-99 (MFSRKKRELM…SPPESGEGPF (99 aa)). Positions 37–55 (DSSNDLASSPPSNSSPVSS) are enriched in low complexity. Over residues 56-66 (GTLKRPSSLSR) the composition is skewed to polar residues. Coiled-coil stretches lie at residues 103–132 (EDIS…EELK) and 363–485 (NMRR…QSDQ). An F-BAR domain is found at 261-524 (EDVDVILQRS…SSKLYDLGQQ (264 aa)). Composition is skewed to basic and acidic residues over residues 414–423 (NATRAEEEQS), 434–444 (RRAEEEAKNRA), and 573–588 (ENKE…ERRG). Disordered regions lie at residues 414–444 (NATR…KNRA) and 564–595 (FNSQ…HQVH). The Phorbol-ester/DAG-type zinc finger occupies 671 to 716 (THRLRKLRTPSKCRECNSYVYFQGAECEECSLACHKKCLETLAIQC). The Rho-GAP domain occupies 730 to 942 (RDFSETALRS…TLIIFYSTIF (213 aa)). A disordered region spans residues 981–1036 (LTPEYQIPVFKEPGASTVESDSESDGAEDIPGTWKPQTTRGHLTKEASVTSAEDIP). Over residues 1015–1031 (KPQTTRGHLTKEASVTS) the composition is skewed to polar residues.

The protein resides in the cytoplasm. It is found in the cell projection. Its subcellular location is the ruffle membrane. Functionally, contains a GTPase activator for the Rho-type GTPases (RhoGAP) domain that would be able to negatively regulate the actin cytoskeleton as well as cell spreading. However, also contains N-terminally a BAR-domin which is able to play an autoinhibitory effect on this RhoGAP activity. The chain is Rho GTPase-activating protein 45 from Xenopus laevis (African clawed frog).